The following is a 199-amino-acid chain: FMN-dependent NADH:quinone oxidoreductase (199 aa).

FMN is bound by residues Ser9 and 95-98 (MYNF).

It belongs to the azoreductase type 1 family. As to quaternary structure, homodimer. The cofactor is FMN.

It catalyses the reaction 2 a quinone + NADH + H(+) = 2 a 1,4-benzosemiquinone + NAD(+). The enzyme catalyses N,N-dimethyl-1,4-phenylenediamine + anthranilate + 2 NAD(+) = 2-(4-dimethylaminophenyl)diazenylbenzoate + 2 NADH + 2 H(+). Its function is as follows. Quinone reductase that provides resistance to thiol-specific stress caused by electrophilic quinones. Functionally, also exhibits azoreductase activity. Catalyzes the reductive cleavage of the azo bond in aromatic azo compounds to the corresponding amines. The chain is FMN-dependent NADH:quinone oxidoreductase from Dechloromonas aromatica (strain RCB).